The sequence spans 1134 residues: Vinculin (1134 aa).

The segment at 1–835 is N-terminal globular head; sequence MPVFHTRTIE…GAVAKVREAF (835 aa). At S97 the chain carries Phosphoserine. The interval 168–208 is talin-interaction; sequence MTKMAKMIDERQQELTHQEHRVMLVNSMNTVKELLPVLISA. K173 carries the post-translational modification N6-acetyllysine. Repeat copies occupy residues 259-369, 370-479, and 480-589. The 3 X 112 AA tandem repeats stretch occupies residues 259 to 589; that stretch reads ASKDTEAMKR…LKDLKARMQE (331 aa). Phosphoserine is present on residues S260, S272, S275, S288, S290, S346, and S434. N6-acetyllysine is present on K496. Position 537 is a phosphotyrosine (Y537). 3 positions are modified to phosphoserine: S574, S579, and S600. T604 and T672 each carry phosphothreonine. S721 is subject to Phosphoserine. The interval 741–764 is interaction with ACTN4; sequence MANIQPQMLVAGATSIARRANRIL. Phosphoserine occurs at positions 795 and 809. Position 822 is a phosphotyrosine (Y822). Positions 836 to 878 are linker (Pro-rich); that stretch reads QPQEPDFPPPPPDLEQLRLTDELAPPKPPLPEGEVPPPRPPPP. Residues 857 to 887 are disordered; sequence ELAPPKPPLPEGEVPPPRPPPPEEKDEEFPE. Pro residues predominate over residues 860 to 876; sequence PPKPPLPEGEVPPPRPP. The C-terminal tail stretch occupies residues 879-1134; the sequence is EEKDEEFPEQ…RWVRKTPWYQ (256 aa). Facilitates phospholipid membrane insertion stretches follow at residues 1003–1046 and 1120–1134; these read RLVR…KRIR and AGFT…PWYQ. Y1133 carries the phosphotyrosine; by SRC-type Tyr-kinases modification.

It belongs to the vinculin/alpha-catenin family. Exhibits self-association properties. Part of a complex composed of THSD1, PTK2/FAK1, TLN1 and VCL. Interacts with APBB1IP and NRAP. Interacts with TLN1. Interacts with CTNNB1 and this interaction is necessary for its localization to the cell-cell junctions and for its function in regulating cell surface expression of E-cadherin. Interacts with SYNM. Interacts with SORBS1. Interacts with CTNNA1. Binds to ACTN4; this interaction triggers conformational changes. Interacts with FLII. As to quaternary structure, (Microbial infection) Interacts via its globular head domain with the central portion of S.flexneri IcsA (also called VirG). In terms of processing, phosphorylated; on serines, threonines and tyrosines. Phosphorylation on Tyr-1133 in activated platelets affects head-tail interactions and cell spreading but has no effect on actin binding nor on localization to focal adhesion plaques. Acetylated; mainly by myristic acid but also by a small amount of palmitic acid. Metavinculin is muscle-specific.

It localises to the cell membrane. The protein resides in the cell junction. It is found in the adherens junction. Its subcellular location is the focal adhesion. The protein localises to the cytoplasm. It localises to the cytoskeleton. The protein resides in the sarcolemma. It is found in the cell projection. Its subcellular location is the podosome. In terms of biological role, actin filament (F-actin)-binding protein involved in cell-matrix adhesion and cell-cell adhesion. Regulates cell-surface E-cadherin expression and potentiates mechanosensing by the E-cadherin complex. May also play important roles in cell morphology and locomotion. The sequence is that of Vinculin (VCL) from Homo sapiens (Human).